The following is a 438-amino-acid chain: Adenylosuccinate synthetase (438 aa).

GTP-binding positions include 13-19 (GDEGKGK) and 41-43 (GHT). The Proton acceptor role is filled by Asp-14. 2 residues coordinate Mg(2+): Asp-14 and Gly-41. Residues 14 to 17 (DEGK), 39 to 42 (NAGH), Thr-130, Arg-144, Gln-225, Thr-240, and Arg-310 contribute to the IMP site. The Proton donor role is filled by His-42. 306–312 (ATTGRLR) contacts substrate. GTP is bound by residues Arg-312, 338–340 (KLD), and 421–423 (STG).

The protein belongs to the adenylosuccinate synthetase family. Homodimer. Mg(2+) serves as cofactor.

It is found in the cytoplasm. It carries out the reaction IMP + L-aspartate + GTP = N(6)-(1,2-dicarboxyethyl)-AMP + GDP + phosphate + 2 H(+). It participates in purine metabolism; AMP biosynthesis via de novo pathway; AMP from IMP: step 1/2. Plays an important role in the de novo pathway of purine nucleotide biosynthesis. Catalyzes the first committed step in the biosynthesis of AMP from IMP. This is Adenylosuccinate synthetase from Vibrio vulnificus (strain YJ016).